We begin with the raw amino-acid sequence, 364 residues long: Ribosomal RNA large subunit methyltransferase M (364 aa).

S-adenosyl-L-methionine-binding positions include S198, 231-234, D250, D270, and D286; that span reads APGG. Catalysis depends on K315, which acts as the Proton acceptor.

It belongs to the class I-like SAM-binding methyltransferase superfamily. RNA methyltransferase RlmE family. RlmM subfamily. Monomer.

The protein resides in the cytoplasm. It catalyses the reaction cytidine(2498) in 23S rRNA + S-adenosyl-L-methionine = 2'-O-methylcytidine(2498) in 23S rRNA + S-adenosyl-L-homocysteine + H(+). In terms of biological role, catalyzes the 2'-O-methylation at nucleotide C2498 in 23S rRNA. This chain is Ribosomal RNA large subunit methyltransferase M, found in Thauera aminoaromatica.